The primary structure comprises 96 residues: YcgL domain-containing protein VS_0884 (96 aa).

Residues 1 to 84 (MLCSIYKSSK…PPVNELELHK (84 aa)) form the YcgL domain.

The protein is YcgL domain-containing protein VS_0884 of Vibrio atlanticus (strain LGP32) (Vibrio splendidus (strain Mel32)).